Reading from the N-terminus, the 518-residue chain is Glucose-1-phosphate adenylyltransferase large subunit 2, cytosolic (518 aa).

Belongs to the bacterial/plant glucose-1-phosphate adenylyltransferase family. Heterotetramer composed of two small and two large subunits.

Its subcellular location is the cytoplasm. The protein localises to the cytosol. The catalysed reaction is alpha-D-glucose 1-phosphate + ATP + H(+) = ADP-alpha-D-glucose + diphosphate. It participates in glycan biosynthesis; starch biosynthesis. With respect to regulation, activated by 3'phosphoglycerate, inhibited by orthophosphate. Allosteric regulation. Inhibited by inorganic phosphate (Pi). Functionally, involved in synthesis of starch. Catalyzes the synthesis of ADP-glucose, a molecule that serves as an activated glycosyl donor for alpha-1,4-glucan synthesis. Essential for starch synthesis in seed endosperm. Is essential for both catalytic and allosteric regulatory properties of the cytosolic heterotetramer enzyme. In Oryza sativa subsp. japonica (Rice), this protein is Glucose-1-phosphate adenylyltransferase large subunit 2, cytosolic.